Consider the following 146-residue polypeptide: Large ribosomal subunit protein bL19 (146 aa).

It belongs to the bacterial ribosomal protein bL19 family.

Its function is as follows. This protein is located at the 30S-50S ribosomal subunit interface and may play a role in the structure and function of the aminoacyl-tRNA binding site. The protein is Large ribosomal subunit protein bL19 of Bartonella bacilliformis (strain ATCC 35685 / KC583 / Herrer 020/F12,63).